The chain runs to 436 residues: 3-ketoacyl-CoA thiolase (436 aa).

The active-site Acyl-thioester intermediate is the C99. Catalysis depends on proton acceptor residues H392 and C422.

It belongs to the thiolase-like superfamily. Thiolase family. Heterotetramer of two alpha chains (FadJ) and two beta chains (FadI).

It is found in the cytoplasm. The catalysed reaction is an acyl-CoA + acetyl-CoA = a 3-oxoacyl-CoA + CoA. Its pathway is lipid metabolism; fatty acid beta-oxidation. In terms of biological role, catalyzes the final step of fatty acid oxidation in which acetyl-CoA is released and the CoA ester of a fatty acid two carbons shorter is formed. In Yersinia enterocolitica serotype O:8 / biotype 1B (strain NCTC 13174 / 8081), this protein is 3-ketoacyl-CoA thiolase.